Consider the following 187-residue polypeptide: MTATAPNTAQQLKYIKDSIKTIPDYPKAGILFRDVTSLLEDPLAYAASIELLTERYLDKGVTKVVGTEARGFLFGAPVALSLGVGFVPVRKPGKLPRATISESYELEYGTDKLEIHTDSIKPGDKVLVIDDLLATGGTIEATVKLIRKLGGEVTDAAFVINLPDLGGEARLNDQGITCYSLVDFSGH.

It belongs to the purine/pyrimidine phosphoribosyltransferase family. In terms of assembly, homodimer.

The protein localises to the cytoplasm. It catalyses the reaction AMP + diphosphate = 5-phospho-alpha-D-ribose 1-diphosphate + adenine. It functions in the pathway purine metabolism; AMP biosynthesis via salvage pathway; AMP from adenine: step 1/1. Catalyzes a salvage reaction resulting in the formation of AMP, that is energically less costly than de novo synthesis. This Yersinia enterocolitica serotype O:8 / biotype 1B (strain NCTC 13174 / 8081) protein is Adenine phosphoribosyltransferase.